We begin with the raw amino-acid sequence, 632 residues long: Extracellular metalloproteinase 2 (632 aa).

Positions 1–19 are cleaved as a signal peptide; that stretch reads MHGLLLAGLAVALPLGVAG. A propeptide spanning residues 20-244 is cleaved from the precursor; that stretch reads HPARPQTALS…VHNVVDYVAS (225 aa). N270 is a glycosylation site (N-linked (GlcNAc...) asparagine). Positions 294-310 are enriched in polar residues; sequence NNVAAQDNPSGGSQWEN. The tract at residues 294-313 is disordered; that stretch reads NNVAAQDNPSGGSQWENNYR. H429 lines the Zn(2+) pocket. E430 is an active-site residue. H433 is a Zn(2+) binding site.

It belongs to the peptidase M36 family. Zn(2+) is required as a cofactor.

The protein localises to the secreted. Secreted metalloproteinase probably acting as a virulence factor. This chain is Extracellular metalloproteinase 2 (MEP2), found in Arthroderma otae (Microsporum canis).